The following is a 465-amino-acid chain: Lactaldehyde dehydrogenase (465 aa).

Residue 220–225 participates in NAD(+) binding; sequence GSVEVG. Active-site residues include E240 and C274.

It belongs to the aldehyde dehydrogenase family. Homotetramer.

It catalyses the reaction (S)-lactaldehyde + NAD(+) + H2O = (S)-lactate + NADH + 2 H(+). It functions in the pathway cofactor biosynthesis; coenzyme F420 biosynthesis. In terms of biological role, involved in F420 biosynthesis through the oxidation of lactaldehyde to lactate. The polypeptide is Lactaldehyde dehydrogenase (Methanococcus maripaludis (strain C5 / ATCC BAA-1333)).